A 594-amino-acid polypeptide reads, in one-letter code: Pentatricopeptide repeat-containing protein At1g15480, mitochondrial (594 aa).

A mitochondrion-targeting transit peptide spans 1 to 67; the sequence is MFALSKVLRR…WSSSTGRRSL (67 aa). Residues 62 to 75 are compositionally biased toward low complexity; sequence TGRRSLSSDAGAKT. Residues 62–109 form a disordered region; the sequence is TGRRSLSSDAGAKTTGDDDDLEDKNVDLATPDETSSDSEDGEEFSGDE. The segment covering 95–109 has biased composition (acidic residues); it reads TSSDSEDGEEFSGDE. 7 PPR repeats span residues 226–260, 261–294, 295–329, 330–364, 432–466, 467–502, and 503–537; these read GELVYRTLLANHVATSNVRTAEAVFNKMKDLGFPL, STFTCNQMLILYKRVDKKKIADVLLLLEKENLKP, NLNTYKILIDTKGSSNDITGMEQIVETMKSEGVEL, DLRARALIARHYASAGLKEKAEKVLKEMEGESLEE, SSNVYSVLLRVYVDHKMVSEGKDLVKQMSDSGCNI, GALTWDAVIKLYVEAGEVEKAESSLSKAIQSKQIKP, and LMSSFMYLMHEYVRRGDVHNTEKIFQRMKQAGYQS.

This sequence belongs to the PPR family. P subfamily.

The protein resides in the mitochondrion. The chain is Pentatricopeptide repeat-containing protein At1g15480, mitochondrial from Arabidopsis thaliana (Mouse-ear cress).